A 446-amino-acid polypeptide reads, in one-letter code: Tubulin alpha-1B chain (446 aa).

GTP is bound at residue Gln11. Positions 34–55 (GRLMDDSPSKHDSGSTFFSETG) are disordered. The span at 35–46 (RLMDDSPSKHDS) shows a compositional bias: basic and acidic residues. GTP-binding residues include Glu69, Ser138, Gly142, Thr143, Ser177, Asn204, and Asn226. Glu69 contributes to the Mg(2+) binding site. Glu252 is an active-site residue.

It belongs to the tubulin family. In terms of assembly, dimer of alpha and beta chains. A typical microtubule is a hollow water-filled tube with an outer diameter of 25 nm and an inner diameter of 15 nM. Alpha-beta heterodimers associate head-to-tail to form protofilaments running lengthwise along the microtubule wall with the beta-tubulin subunit facing the microtubule plus end conferring a structural polarity. Microtubules usually have 13 protofilaments but different protofilament numbers can be found in some organisms and specialized cells. Requires Mg(2+) as cofactor.

The protein localises to the cytoplasm. It localises to the cytoskeleton. It catalyses the reaction GTP + H2O = GDP + phosphate + H(+). Its function is as follows. Tubulin is the major constituent of microtubules, a cylinder consisting of laterally associated linear protofilaments composed of alpha- and beta-tubulin heterodimers. Microtubules grow by the addition of GTP-tubulin dimers to the microtubule end, where a stabilizing cap forms. Below the cap, tubulin dimers are in GDP-bound state, owing to GTPase activity of alpha-tubulin. In Schizophyllum commune (Split gill fungus), this protein is Tubulin alpha-1B chain (TUB-1B).